The primary structure comprises 545 residues: uncharacterized protein (545 aa).

Disordered stretches follow at residues 1-162 (MSSG…DPQE) and 200-250 (YPPV…EPPP). Over residues 86–100 (NYRSHSSADYLTPNS) the composition is skewed to polar residues. Low complexity-rich tracts occupy residues 109–128 (TTPR…TATK) and 141–152 (SGASTSSGTSST). Composition is skewed to polar residues over residues 212-221 (SSRTGTLQRT) and 228-244 (ISST…QMQS). The PDZ domain maps to 458–540 (RVLVEKMMPG…VTITLLPAVG (83 aa)).

This is an uncharacterized protein from Caenorhabditis elegans.